We begin with the raw amino-acid sequence, 267 residues long: Tryptophan synthase alpha chain (267 aa).

Residues Glu-43 and Asp-54 each act as proton acceptor in the active site.

It belongs to the TrpA family. Tetramer of two alpha and two beta chains.

The catalysed reaction is (1S,2R)-1-C-(indol-3-yl)glycerol 3-phosphate + L-serine = D-glyceraldehyde 3-phosphate + L-tryptophan + H2O. The protein operates within amino-acid biosynthesis; L-tryptophan biosynthesis; L-tryptophan from chorismate: step 5/5. Its function is as follows. The alpha subunit is responsible for the aldol cleavage of indoleglycerol phosphate to indole and glyceraldehyde 3-phosphate. In Bacillus pumilus (strain SAFR-032), this protein is Tryptophan synthase alpha chain.